Consider the following 318-residue polypeptide: MEKMNYLLPEESGEMTLSGITTLRKMEQKLRNLFESQNYQEVMPPNFESVELYTGLDAGFEQEKMFQFINHEGKSIALRYDFTVPLARNFALSELKEARYSYFGKVFRKEKRHKGRRTESYQVGTELLGLSEVTGDQEILGLTFMTLEALTLKNTIVEIGSAAFFKRLCELSGGDAPLFSELLEKKSLSGMKAFVDKHEMRGAPRDLLLALMTTTDLPTMKKLVLATGDEKLSQALEMLEALNLPDKTAICQIHYDFAMVPAMGYYTGLMFQVYVEGVAQAVISGGRYDKLLKQFGKTTGSIGFCVHMENVMKGLNND.

Belongs to the class-II aminoacyl-tRNA synthetase family. HisZ subfamily. As to quaternary structure, heteromultimer composed of HisG and HisZ subunits.

The protein resides in the cytoplasm. Its pathway is amino-acid biosynthesis; L-histidine biosynthesis; L-histidine from 5-phospho-alpha-D-ribose 1-diphosphate: step 1/9. In terms of biological role, required for the first step of histidine biosynthesis. May allow the feedback regulation of ATP phosphoribosyltransferase activity by histidine. The chain is ATP phosphoribosyltransferase regulatory subunit from Lactococcus lactis subsp. cremoris (strain SK11).